Reading from the N-terminus, the 364-residue chain is UDP-N-acetylglucosamine--N-acetylmuramyl-(pentapeptide) pyrophosphoryl-undecaprenol N-acetylglucosamine transferase (364 aa).

UDP-N-acetyl-alpha-D-glucosamine-binding positions include 12 to 14 (TGG), Asn-124, Arg-167, Ser-195, Ile-249, 268 to 273 (ALTVSE), and Gln-294.

It belongs to the glycosyltransferase 28 family. MurG subfamily.

It localises to the cell inner membrane. The catalysed reaction is di-trans,octa-cis-undecaprenyl diphospho-N-acetyl-alpha-D-muramoyl-L-alanyl-D-glutamyl-meso-2,6-diaminopimeloyl-D-alanyl-D-alanine + UDP-N-acetyl-alpha-D-glucosamine = di-trans,octa-cis-undecaprenyl diphospho-[N-acetyl-alpha-D-glucosaminyl-(1-&gt;4)]-N-acetyl-alpha-D-muramoyl-L-alanyl-D-glutamyl-meso-2,6-diaminopimeloyl-D-alanyl-D-alanine + UDP + H(+). The protein operates within cell wall biogenesis; peptidoglycan biosynthesis. Cell wall formation. Catalyzes the transfer of a GlcNAc subunit on undecaprenyl-pyrophosphoryl-MurNAc-pentapeptide (lipid intermediate I) to form undecaprenyl-pyrophosphoryl-MurNAc-(pentapeptide)GlcNAc (lipid intermediate II). This chain is UDP-N-acetylglucosamine--N-acetylmuramyl-(pentapeptide) pyrophosphoryl-undecaprenol N-acetylglucosamine transferase, found in Alteromonas mediterranea (strain DSM 17117 / CIP 110805 / LMG 28347 / Deep ecotype).